We begin with the raw amino-acid sequence, 182 residues long: UPF0397 protein SPG_0438 (182 aa).

Transmembrane regions (helical) follow at residues 10–30, 46–66, 73–93, 109–129, and 148–168; these read VVAV…NIPT, LLSI…GHAI, YGLW…VGLF, ILIF…VLAP, and IVAG…LLLA.

Belongs to the UPF0397 family.

Its subcellular location is the cell membrane. The protein is UPF0397 protein SPG_0438 of Streptococcus pneumoniae serotype 19F (strain G54).